We begin with the raw amino-acid sequence, 90 residues long: Sec-independent protein translocase protein TatA (90 aa).

A helical membrane pass occupies residues 2–22 (GVGGISIWQLLIVLVIILLLF). 2 stretches are compositionally biased toward basic and acidic residues: residues 45–68 (LRDE…HKAE) and 76–90 (ADAD…DEHK). Residues 45-90 (LRDEERRDAEEAATIEHKQAHKAENPSQRQQADADFKIKSGNDEHK) form a disordered region.

The protein belongs to the TatA/E family. The Tat system comprises two distinct complexes: a TatABC complex, containing multiple copies of TatA, TatB and TatC subunits, and a separate TatA complex, containing only TatA subunits. Substrates initially bind to the TatABC complex, which probably triggers association of the separate TatA complex to form the active translocon.

It localises to the cell inner membrane. Its function is as follows. Part of the twin-arginine translocation (Tat) system that transports large folded proteins containing a characteristic twin-arginine motif in their signal peptide across membranes. TatA could form the protein-conducting channel of the Tat system. This chain is Sec-independent protein translocase protein TatA, found in Nitrosococcus oceani (strain ATCC 19707 / BCRC 17464 / JCM 30415 / NCIMB 11848 / C-107).